An 862-amino-acid chain; its full sequence is DNA mismatch repair protein MutS (862 aa).

Residue 608–615 (GPNMAGKS) participates in ATP binding.

Belongs to the DNA mismatch repair MutS family.

Its function is as follows. This protein is involved in the repair of mismatches in DNA. It is possible that it carries out the mismatch recognition step. This protein has a weak ATPase activity. This chain is DNA mismatch repair protein MutS, found in Bacteroides fragilis (strain YCH46).